We begin with the raw amino-acid sequence, 128 residues long: Large ribosomal subunit protein bL12 (128 aa).

Belongs to the bacterial ribosomal protein bL12 family. As to quaternary structure, homodimer. Part of the ribosomal stalk of the 50S ribosomal subunit. Forms a multimeric L10(L12)X complex, where L10 forms an elongated spine to which 2 to 4 L12 dimers bind in a sequential fashion. Binds GTP-bound translation factors.

Forms part of the ribosomal stalk which helps the ribosome interact with GTP-bound translation factors. Is thus essential for accurate translation. The chain is Large ribosomal subunit protein bL12 from Synechococcus sp. (strain ATCC 27144 / PCC 6301 / SAUG 1402/1) (Anacystis nidulans).